The chain runs to 409 residues: Glutamyl-tRNA(Gln) amidotransferase subunit D (409 aa).

In terms of domain architecture, Asparaginase/glutaminase spans 68–390 (RKISVLATGG…DLFRDLFRKN (323 aa)). Residues T78, T152, D153, and K230 contribute to the active site.

It belongs to the asparaginase 1 family. GatD subfamily. Heterodimer of GatD and GatE.

The catalysed reaction is L-glutamyl-tRNA(Gln) + L-glutamine + ATP + H2O = L-glutaminyl-tRNA(Gln) + L-glutamate + ADP + phosphate + H(+). Its function is as follows. Allows the formation of correctly charged Gln-tRNA(Gln) through the transamidation of misacylated Glu-tRNA(Gln) in organisms which lack glutaminyl-tRNA synthetase. The reaction takes place in the presence of glutamine and ATP through an activated gamma-phospho-Glu-tRNA(Gln). The GatDE system is specific for glutamate and does not act on aspartate. The sequence is that of Glutamyl-tRNA(Gln) amidotransferase subunit D from Thermoplasma acidophilum (strain ATCC 25905 / DSM 1728 / JCM 9062 / NBRC 15155 / AMRC-C165).